Consider the following 141-residue polypeptide: Histone H2B (141 aa).

The segment covering 1–10 (MAPKAAEKKP) has biased composition (basic and acidic residues). The interval 1 to 49 (MAPKAAEKKPSTGGKAPAGGKAPAEKKEAGKKTAAAASGDKKKRGKTRK) is disordered. Lys8 and Lys9 each carry N6-acetyllysine; alternate. Residues Lys8 and Lys9 each participate in a glycyl lysine isopeptide (Lys-Gly) (interchain with G-Cter in SUMO); alternate cross-link. Over residues 11-22 (STGGKAPAGGKA) the composition is skewed to low complexity. Lys15 is modified (N6-acetyllysine). Lys26 is modified (N6-acetyllysine; alternate). Residue Lys26 forms a Glycyl lysine isopeptide (Lys-Gly) (interchain with G-Cter in SUMO); alternate linkage. A Glycyl lysine isopeptide (Lys-Gly) (interchain with G-Cter in SUMO) cross-link involves residue Lys27. A Glycyl lysine isopeptide (Lys-Gly) (interchain with G-Cter in ubiquitin) cross-link involves residue Lys135.

Belongs to the histone H2B family. As to quaternary structure, the nucleosome is a histone octamer containing two molecules each of H2A, H2B, H3 and H4 assembled in one H3-H4 heterotetramer and two H2A-H2B heterodimers. The octamer wraps approximately 147 bp of DNA. Monoubiquitinated by the ubc2-bre1 complex to form H2BK123ub1. H2BK123ub1 gives a specific tag for epigenetic transcriptional activation and is also prerequisite for H3K4me and H3K79me formation. H2BK123ub1 also modulates the formation of double-strand breaks during meiosis and is a prerequisite for DNA-damage checkpoint activation. In terms of processing, acetylated by gcn5 to form H2BK11ac and H2BK16ac. H2BK16ac can also be formed by esa1. Acetylation of N-terminal lysines and particularly formation of H2BK11acK16ac has a positive effect on transcription. Post-translationally, sumoylation to form H2BK6su or H2BK7su, and probably also H2BK16su or H2BK17su, occurs preferentially near the telomeres and represses gene transcription.

Its subcellular location is the nucleus. The protein localises to the chromosome. Core component of nucleosome. Nucleosomes wrap and compact DNA into chromatin, limiting DNA accessibility to the cellular machineries which require DNA as a template. Histones thereby play a central role in transcription regulation, DNA repair, DNA replication and chromosomal stability. DNA accessibility is regulated via a complex set of post-translational modifications of histones, also called histone code, and nucleosome remodeling. In Aspergillus oryzae (strain ATCC 42149 / RIB 40) (Yellow koji mold), this protein is Histone H2B (htb1).